Here is a 222-residue protein sequence, read N- to C-terminus: Charged multivesicular body protein 3 (222 aa).

A lipid anchor (N-myristoyl glycine) is attached at G2. An intramolecular interaction with C-terminus region spans residues 2-113 (GLFGKTQEKP…LQKSTEVMKA (112 aa)). Residues 22 to 54 (KIRKEMRVVDRQIRDIQREEEKVKRSVKDAAKK) adopt a coiled-coil conformation. Important for autoinhibitory function stretches follow at residues 59-64 (VCVVLA) and 168-169 (IL). Residues 149–222 (ESMDDQEEME…MQSRLATLRS (74 aa)) adopt a coiled-coil conformation. Positions 151-220 (MDDQEEMEEA…EAMQSRLATL (70 aa)) are intramolecular interaction with N-terminus. Residues 151 to 222 (MDDQEEMEEA…MQSRLATLRS (72 aa)) are interaction with VPS4A. A Glycyl lysine isopeptide (Lys-Gly) (interchain with G-Cter in ubiquitin) cross-link involves residue K179. The tract at residues 180–222 (APSKVTDALPEPEPLGAMAASEDEEEEEEALEAMQSRLATLRS) is disordered. 3 interaction with STAMBP regions span residues 196–222 (AMAA…TLRS), 203–207 (EEEEE), and 221–222 (RS). Phosphoserine is present on S200. The segment covering 200–210 (SEDEEEEEEAL) has biased composition (acidic residues). The short motif at 201 to 211 (EDEEEEEEALE) is the MIT-interacting motif element.

Belongs to the SNF7 family. Probable core component of the endosomal sorting required for transport complex III (ESCRT-III). ESCRT-III components are thought to multimerize to form a flat lattice on the perimeter membrane of the endosome. Several assembly forms of ESCRT-III may exist that interact and act sequentially. Forms a metastable monomer in solution; its core structure (without part of the putative autoinhibitory C-terminal acidic region) oligomerizes into a flat lattice via two different dimerization interfaces. In vitro, heteromerizes with CHMP2A (but not CHMP4) to form helical tubular structures that expose membrane-interacting sites on the outside whereas VPS4B can associate on the inside of the tubule. May interact with IGFBP7; the relevance of such interaction however remains unclear. Interacts with CHMP2A. Interacts with CHMP4A; the interaction requires the release of CHMP4A autoinhibition. Interacts with VPS4A. Interacts with STAMBP; the interaction appears to relieve the autoinhibition of CHMP3. Interacts with VTA1.

The protein localises to the cytoplasm. It localises to the cytosol. Its subcellular location is the membrane. It is found in the endosome. The protein resides in the late endosome membrane. In terms of biological role, probable core component of the endosomal sorting required for transport complex III (ESCRT-III) which is involved in multivesicular bodies (MVBs) formation and sorting of endosomal cargo proteins into MVBs. MVBs contain intraluminal vesicles (ILVs) that are generated by invagination and scission from the limiting membrane of the endosome and mostly are delivered to lysosomes enabling degradation of membrane proteins, such as stimulated growth factor receptors, lysosomal enzymes and lipids. The MVB pathway appears to require the sequential function of ESCRT-O, -I,-II and -III complexes. ESCRT-III proteins mostly dissociate from the invaginating membrane before the ILV is released. The ESCRT machinery also functions in topologically equivalent membrane fission events, such as the terminal stages of cytokinesis and the budding of enveloped viruses (lentiviruses). ESCRT-III proteins are believed to mediate the necessary vesicle extrusion and/or membrane fission activities, possibly in conjunction with the AAA ATPase VPS4. Selectively binds to phosphatidylinositol 3,5-bisphosphate PtdIns(3,5)P2 and PtdIns(3,4)P2 in preference to other phosphoinositides tested. Involved in late stages of cytokinesis. Plays a role in endosomal sorting/trafficking of EGF receptor. The chain is Charged multivesicular body protein 3 (CHMP3) from Bos taurus (Bovine).